A 267-amino-acid chain; its full sequence is MKYYRRALYDKFVHFYLVISDDGSSEAQLRGKMGGLVRKARKKISPDWPKEEQIHQLLQLFYGDWGFHCDPEDYFYARNLYLPYVFEHRQGMPVTLGAMVFYLAEALDLPIYPVNFPTQLILRAEVRDEVAFIDPWDGTYISQEKLQQLYEGAFGFGAKIQPEELDRADLSLLYSRFEQLAKNALIREEHNDMAYHYIKNLMITDAENPYHIRDRGLVLAQMGAYPSALKDLEFFVEHCPKDPTAAFIRTQLLELKGEINKDTFPLH.

It belongs to the UPF0162 family.

This chain is UPF0162 protein HI_1558, found in Haemophilus influenzae (strain ATCC 51907 / DSM 11121 / KW20 / Rd).